The chain runs to 257 residues: Ribonuclease HII (257 aa).

Positions Thr-72 to Lys-257 constitute an RNase H type-2 domain. The a divalent metal cation site is built by Asp-78, Glu-79, and Asp-170.

The protein belongs to the RNase HII family. Mn(2+) is required as a cofactor. The cofactor is Mg(2+).

It is found in the cytoplasm. It carries out the reaction Endonucleolytic cleavage to 5'-phosphomonoester.. Endonuclease that specifically degrades the RNA of RNA-DNA hybrids. This is Ribonuclease HII from Bacillus cereus (strain G9842).